A 254-amino-acid polypeptide reads, in one-letter code: K88 minor fimbrial subunit FaeI (254 aa).

Positions 1-20 (MKKVTLFLFVVSLLPSTVLA) are cleaved as a signal peptide.

The protein belongs to the fimbrial K88 protein family.

Its subcellular location is the fimbrium. In terms of biological role, K88 minor fimbrial subunit, plays an essential role in the biogenesis of the K88 fimbriae. Fimbriae (also called pili), are polar filaments radiating from the surface of the bacterium to a length of 0.5-1.5 micrometers and numbering 100-300 per cell. They enable bacteria to colonize the epithelium of specific host organs. The chain is K88 minor fimbrial subunit FaeI (faeI) from Escherichia coli.